We begin with the raw amino-acid sequence, 278 residues long: Phosphonates import ATP-binding protein PhnC 2 (278 aa).

Residues 5–253 (IRVDSLNKTF…FLNELYGAEG (249 aa)) enclose the ABC transporter domain. Residue 37 to 44 (GASGSGKS) participates in ATP binding.

It belongs to the ABC transporter superfamily. Phosphonates importer (TC 3.A.1.9.1) family. As to quaternary structure, the complex is composed of two ATP-binding proteins (PhnC), two transmembrane proteins (PhnE) and a solute-binding protein (PhnD).

The protein localises to the cell inner membrane. It catalyses the reaction phosphonate(out) + ATP + H2O = phosphonate(in) + ADP + phosphate + H(+). Part of the ABC transporter complex PhnCDE involved in phosphonates import. Responsible for energy coupling to the transport system. In Pseudomonas aeruginosa (strain ATCC 15692 / DSM 22644 / CIP 104116 / JCM 14847 / LMG 12228 / 1C / PRS 101 / PAO1), this protein is Phosphonates import ATP-binding protein PhnC 2.